The following is a 425-amino-acid chain: UDP-N-acetylglucosamine 1-carboxyvinyltransferase (425 aa).

Position 22 to 23 (22 to 23 (KN)) interacts with phosphoenolpyruvate. Arg-93 is a UDP-N-acetyl-alpha-D-glucosamine binding site. Asp-117 functions as the Proton donor in the catalytic mechanism. UDP-N-acetyl-alpha-D-glucosamine is bound by residues Asp-312 and Met-334.

Belongs to the EPSP synthase family. MurA subfamily.

It localises to the cytoplasm. It catalyses the reaction phosphoenolpyruvate + UDP-N-acetyl-alpha-D-glucosamine = UDP-N-acetyl-3-O-(1-carboxyvinyl)-alpha-D-glucosamine + phosphate. It functions in the pathway cell wall biogenesis; peptidoglycan biosynthesis. Functionally, cell wall formation. Adds enolpyruvyl to UDP-N-acetylglucosamine. This Treponema pallidum (strain Nichols) protein is UDP-N-acetylglucosamine 1-carboxyvinyltransferase.